Here is a 154-residue protein sequence, read N- to C-terminus: MILGEYVLRDLFPDLDEDQYQPAGIDLKLDRVFRLEGRGALLEGDDKRLPEYREVETEGGVFELEPNVPYVLELAPELEIPEDTAVLFLPRSTLLRSGVSVHTALGDPGFRGKIRVLAVNHHAAPYRIAHGERVVQAVFLRAEDAGRYEGDYGR.

This sequence belongs to the dCTP deaminase family. Archaeal dUTPase subfamily.

It carries out the reaction dUTP + H2O = dUMP + diphosphate + H(+). The protein operates within pyrimidine metabolism; dUMP biosynthesis; dUMP from dCTP (dUTP route): step 2/2. This enzyme is involved in nucleotide metabolism: it produces dUMP, the immediate precursor of thymidine nucleotides and it decreases the intracellular concentration of dUTP so that uracil cannot be incorporated into DNA. In Methanopyrus kandleri (strain AV19 / DSM 6324 / JCM 9639 / NBRC 100938), this protein is Probable deoxyuridine 5'-triphosphate nucleotidohydrolase.